The sequence spans 94 residues: Pyrimidine/purine nucleoside phosphorylase (94 aa).

This sequence belongs to the nucleoside phosphorylase PpnP family.

It carries out the reaction a purine D-ribonucleoside + phosphate = a purine nucleobase + alpha-D-ribose 1-phosphate. It catalyses the reaction adenosine + phosphate = alpha-D-ribose 1-phosphate + adenine. The catalysed reaction is cytidine + phosphate = cytosine + alpha-D-ribose 1-phosphate. The enzyme catalyses guanosine + phosphate = alpha-D-ribose 1-phosphate + guanine. It carries out the reaction inosine + phosphate = alpha-D-ribose 1-phosphate + hypoxanthine. It catalyses the reaction thymidine + phosphate = 2-deoxy-alpha-D-ribose 1-phosphate + thymine. The catalysed reaction is uridine + phosphate = alpha-D-ribose 1-phosphate + uracil. The enzyme catalyses xanthosine + phosphate = alpha-D-ribose 1-phosphate + xanthine. In terms of biological role, catalyzes the phosphorolysis of diverse nucleosides, yielding D-ribose 1-phosphate and the respective free bases. Can use uridine, adenosine, guanosine, cytidine, thymidine, inosine and xanthosine as substrates. Also catalyzes the reverse reactions. This is Pyrimidine/purine nucleoside phosphorylase from Aeromonas hydrophila subsp. hydrophila (strain ATCC 7966 / DSM 30187 / BCRC 13018 / CCUG 14551 / JCM 1027 / KCTC 2358 / NCIMB 9240 / NCTC 8049).